The primary structure comprises 184 residues: MIKEILKKADEKMGKTIVALKKELASMKAGRANPAMLDRIEAEYYGSMTPLNQLGNISVPEARVLLIQPWDKGALSAIEKAILKSDLGLNPSNDGTVIRLVIPELTEETRKNIVKTVKKTGEEAKVAIRSIRRDCNDDVKNLKKDDVSEDDIKKAEDDIQKKTDKYIKEIDSIISAKEKEILSI.

The protein belongs to the RRF family.

The protein localises to the cytoplasm. Functionally, responsible for the release of ribosomes from messenger RNA at the termination of protein biosynthesis. May increase the efficiency of translation by recycling ribosomes from one round of translation to another. This Clostridium botulinum (strain ATCC 19397 / Type A) protein is Ribosome-recycling factor.